The following is a 265-amino-acid chain: Apolipoprotein A-I (265 aa).

Residues 1-16 (MKAAVLIWLFLMGSQA) form the signal peptide. 2 consecutive repeat copies span residues 66-87 (LKLL…EQLG) and 88-109 (PVTQ…QEMS). Residues 66–265 (LKLLDNWDSL…EEYTKKLSSQ (200 aa)) form a 10 X approximate tandem repeats region. Met-108 bears the Methionine sulfoxide mark. The stretch at 110-120 (KDLEEVKAQVQ) is one 3; half-length repeat. Repeat copies occupy residues 121–142 (PYLD…QKLE), 143–164 (PLRT…EKLS), 165–186 (PLAE…TQLA), 187–208 (PYSD…ENSG), and 209–230 (ASLA…EKAK). Residue Met-134 is modified to Methionine sulfoxide. A 9; half-length repeat occupies 231–241 (PALDDLRQGLL). Copy 10 of the repeat occupies 242-265 (PVLESFKVSFLSALEEYTKKLSSQ).

It belongs to the apolipoprotein A1/A4/E family. In terms of assembly, homodimer. Interacts with APOA1BP and CLU. Component of a sperm activating protein complex (SPAP), consisting of APOA1, an immunoglobulin heavy chain, an immunoglobulin light chain and albumin. Interacts with NDRG1. Interacts with SCGB3A2. Interacts with NAXE and YJEFN3. Glycosylated. In terms of processing, palmitoylated. Post-translationally, phosphorylation sites are present in the extracellular medium.

The protein resides in the secreted. Functionally, participates in the reverse transport of cholesterol from tissues to the liver for excretion by promoting cholesterol efflux from tissues and by acting as a cofactor for the lecithin cholesterol acyltransferase (LCAT). As part of the SPAP complex, activates spermatozoa motility. The polypeptide is Apolipoprotein A-I (APOA1) (Aotus nancymaae (Ma's night monkey)).